Reading from the N-terminus, the 350-residue chain is Probable dTDP-glucose 4,6-dehydratase (350 aa).

Position 7–13 (7–13 (GGAGFIG)) interacts with NAD(+). Threonine 132 contributes to the substrate binding site. The active-site Proton donor is aspartate 133. Residues glutamate 134 and tyrosine 157 each act as proton acceptor in the active site.

The protein belongs to the NAD(P)-dependent epimerase/dehydratase family. dTDP-glucose dehydratase subfamily. NAD(+) is required as a cofactor.

The enzyme catalyses dTDP-alpha-D-glucose = dTDP-4-dehydro-6-deoxy-alpha-D-glucose + H2O. Its pathway is carbohydrate biosynthesis; dTDP-L-rhamnose biosynthesis. This Sinorhizobium fredii (strain NBRC 101917 / NGR234) protein is Probable dTDP-glucose 4,6-dehydratase.